Here is a 339-residue protein sequence, read N- to C-terminus: Undecaprenyl-phosphate 4-deoxy-4-formamido-L-arabinose transferase (339 aa).

A run of 2 helical transmembrane segments spans residues 235 to 255 (LSLVGGGMALAGFLFALFLLV) and 269 to 289 (LFVLFAVLFMFSGVQLLGMGL).

The protein belongs to the glycosyltransferase 2 family.

The protein localises to the cell inner membrane. The enzyme catalyses UDP-4-deoxy-4-formamido-beta-L-arabinose + di-trans,octa-cis-undecaprenyl phosphate = 4-deoxy-4-formamido-alpha-L-arabinopyranosyl di-trans,octa-cis-undecaprenyl phosphate + UDP. It participates in glycolipid biosynthesis; 4-amino-4-deoxy-alpha-L-arabinose undecaprenyl phosphate biosynthesis; 4-amino-4-deoxy-alpha-L-arabinose undecaprenyl phosphate from UDP-4-deoxy-4-formamido-beta-L-arabinose and undecaprenyl phosphate: step 1/2. It functions in the pathway bacterial outer membrane biogenesis; lipopolysaccharide biosynthesis. Catalyzes the transfer of 4-deoxy-4-formamido-L-arabinose from UDP to undecaprenyl phosphate. The modified arabinose is attached to lipid A and is required for resistance to polymyxin and cationic antimicrobial peptides. This chain is Undecaprenyl-phosphate 4-deoxy-4-formamido-L-arabinose transferase, found in Pseudomonas aeruginosa (strain LESB58).